The chain runs to 22 residues: ARTGFGVLKPAMQGYPGLVLPR.

The protein is Unknown protein 10 of Pseudotsuga menziesii (Douglas-fir).